Reading from the N-terminus, the 337-residue chain is Hairy/enhancer-of-split related with YRPW motif protein 2 (337 aa).

The tract at residues 1–52 (MKRPCEETTSESDMDETIDVGSENNYSGQSTSSVIRLNSPTTTSQIMARKKR) is disordered. A compositionally biased stretch (acidic residues) spans 8–18 (TTSESDMDETI). Over residues 22 to 46 (SENNYSGQSTSSVIRLNSPTTTSQI) the composition is skewed to polar residues. The transcriptional repression and interaction with NCOR1 and SIN3A stretch occupies residues 47–116 (MARKKRRGII…GGKGYFDAHA (70 aa)). In terms of domain architecture, bHLH spans 48-103 (ARKKRRGIIEKRRRDRINNSLSELRRLVPTAFEKQGSAKLEKAEILQMTVDHLKML). Residues 122-157 (MSIGFRECLTEVARYLSSVEGLDSSDPLRVRLVSHL) form the Orange domain. The segment covering 307-325 (LSVSATSSPQQTSSGTNNK) has biased composition (polar residues). Residues 307-337 (LSVSATSSPQQTSSGTNNKPYRPWGTEVGAF) form a disordered region. A YRPW motif motif is present at residues 327–330 (YRPW).

It belongs to the HEY family. In terms of assembly, may self-associate. Interacts with GATA4, HES1 and HEYL. Interacts with HDAC1, NCOR1 and SIN3A. Interacts with ARNT and GATA6.

The protein localises to the nucleus. Its function is as follows. Downstream effector of Notch signaling which may be required for cardiovascular development. Transcriptional repressor which binds preferentially to the canonical E box sequence 5'-CACGTG-3'. Represses transcription by the cardiac transcriptional activators GATA4 and GATA6. In Homo sapiens (Human), this protein is Hairy/enhancer-of-split related with YRPW motif protein 2 (HEY2).